Reading from the N-terminus, the 283-residue chain is DNA repair protein RecO (283 aa).

Polar residues predominate over residues serine 254–threonine 264. The segment at serine 254–arginine 283 is disordered.

This sequence belongs to the RecO family.

In terms of biological role, involved in DNA repair and RecF pathway recombination. The chain is DNA repair protein RecO from Roseiflexus sp. (strain RS-1).